Here is a 744-residue protein sequence, read N- to C-terminus: 3-isopropylmalate dehydratase (744 aa).

3 residues coordinate [4Fe-4S] cluster: cysteine 341, cysteine 401, and cysteine 404.

The protein belongs to the aconitase/IPM isomerase family. Monomer. [4Fe-4S] cluster serves as cofactor.

The enzyme catalyses (2R,3S)-3-isopropylmalate = (2S)-2-isopropylmalate. It functions in the pathway amino-acid biosynthesis; L-leucine biosynthesis; L-leucine from 3-methyl-2-oxobutanoate: step 2/4. Catalyzes the isomerization between 2-isopropylmalate and 3-isopropylmalate, via the formation of 2-isopropylmaleate. This chain is 3-isopropylmalate dehydratase (leu1), found in Phycomyces blakesleeanus (strain ATCC 8743b / DSM 1359 / FGSC 10004 / NBRC 33097 / NRRL 1555).